The chain runs to 1341 residues: MLNIIYVVSLILIKFIFYKECNNNNNYYLSNIELYNYKLRKRNRILNNNINDRKSFLSDLEQNYKPLFDIYELSANFEKRRKELEKKTKGEENEIEKKKENDLEKKKENEIEKKKENDLEKEYNDVINLLELSLSSEYKELNADVSNNDNSGHEENNKHKLNKKNSSNYKNDKSLDELIKGAILKLKQNPNIKNKNMLDYDKIFKIIKEKLINKNLASNKIKGGDNEKLKEEKKQSDISTNVEVKKDIINDQLNKGIPTKKENKDDMINKESNKEDITNEGKSNSLNNLNTLNNDGNIITKVYDHYTIVTNSNDILNDISIDASDISKNSIGGINIPFNENDNSSFTHQRYIVLSNNGEKKYKIVLMTKNPKFMDMDGIYDEEEKKESLIELNQKVNKEENTNLYDGTGTLYYGKKSKKEKENTQQKGGNNPNVDINILNNNNNNNNNNNSNNNSNSMNDEEINYNNNNNNKESPSMFRRFINFLSFSGNENETEDTLIYHNKNDNSYKNKKEGTGKNNDNNDPNNNNNKKILLNVDKLVDQYLLNLKNNHTSKQELILVLKGELDLHSKNMKNVINNAKKNLEKYFKEHFKEFDKISYDISTPINFLCIFIPTLFDMNNMDLLKQALLILHNDLHEYVENWSFSSTYHTYEADYIKEQDSVYDRSPKKKYIKASKKLYNNKYSFLNKFLNIEPLILFAKKLNSKRSNIEKEILNFLPKELRDYSTWNLSIIRVFNAWFLAGYGNKNVKVCVVDSGADINHVDLNGNLYIPEYNEKYEMTQDFYNFMVKNPTDASGHGTHVTGIIGGVANDLGVVGVAPNITLISLRFIDGKKYGGSFHAIKALNVCILNKAPIINASWGSSHFDVNLHLAVERLKYTLNGKGSVLIAASGNKSNDNDISPLYPATFTFPHVYSVASISRNFEISPFSNYGHKSVHILAPGHHIYSTIPNNSYKIFTGTSMAAPHVCGVSALVYSVCYNQGFIPQAEEVLDILTRTSIKIISTKKRTINDSLVNAEGAVLTTLLGGLWMQMDCYFVKFNLEKGKKKHIPVVFSAYKKGVYETDIVIAIIPIDGKSKIYGEIHIPIKIVTDVNIPNFQESPRRGKNYTIDSNEAQHDEVLSYICENALYNLYEYDSHYLLASVILFFLALLSIFVGMIYMKSRKHSDKKCSKNLIKSNYIPEMDDGMEETQQLQQERRQYFRELFGENLEKNYDQHFVQDFGQDFRQDFKLGSTPDLKQYSDIDLQNKIQQPERKTVKIIINNFEDRKKETKRRLLKGLNYDGENAKKHDFTNESISNSRKNFKFSNNTEMKKNTIKSEDVKIASDDNVNKAMNQLDDMFMK.

An N-terminal signal peptide occupies residues 1–18; the sequence is MLNIIYVVSLILIKFIFY. A propeptide spans 19–686 (inhibition peptide); the sequence is KECNNNNNYY…KLYNNKYSFL (668 aa). 2 disordered regions span residues 85–107 and 143–171; these read EKKTKGEENEIEKKKENDLEKKK and ADVSNNDNSGHEENNKHKLNKKNSSNYKN. N-linked (GlcNAc...) asparagine glycosylation is found at asparagine 165, asparagine 343, asparagine 449, asparagine 453, and asparagine 492. The interval 415 to 474 is disordered; it reads KKSKKEKENTQQKGGNNPNVDINILNNNNNNNNNNNSNNNSNSMNDEEINYNNNNNNKES. The segment covering 430–474 has biased composition (low complexity); the sequence is NNPNVDINILNNNNNNNNNNNSNNNSNSMNDEEINYNNNNNNKES. Positions 499-530 are disordered; that stretch reads IYHNKNDNSYKNKKEGTGKNNDNNDPNNNNNK. Basic and acidic residues predominate over residues 502 to 515; sequence NKNDNSYKNKKEGT. Over residues 517 to 530 the composition is skewed to low complexity; it reads KNNDNNDPNNNNNK. Asparagine 550, asparagine 641, and asparagine 728 each carry an N-linked (GlcNAc...) asparagine glycan. At 687 to 1136 the chain is on the extracellular side; sequence NKFLNIEPLI…LYNLYEYDSH (450 aa). A Peptidase S8 domain is found at 726-1019; it reads TWNLSIIRVF…DSLVNAEGAV (294 aa). Active-site charge relay system residues include aspartate 754 and histidine 797. N-linked (GlcNAc...) asparagine glycans are attached at residues asparagine 820, asparagine 856, asparagine 892, and asparagine 950. The Charge relay system role is filled by serine 960. 2 N-linked (GlcNAc...) asparagine glycosylation sites follow: asparagine 1009 and asparagine 1105. The helical transmembrane segment at 1137–1157 threads the bilayer; sequence YLLASVILFFLALLSIFVGMI. The Cytoplasmic portion of the chain corresponds to 1158–1341; that stretch reads YMKSRKHSDK…MNQLDDMFMK (184 aa).

It belongs to the peptidase S8 family. In terms of processing, proteolytically cleaved at the N-terminus to generate a 74kDa intermediate which is further processed into a 72kDa form. The first maturation cleavage is autocatalytic, occurs in the ER and is necessary for the subsequent SUB2 trafficking to the microneme. The second cleavage may be mediated by PMX/plasmepsin X.

Its subcellular location is the cell membrane. It is found in the cytoplasmic vesicle. It localises to the secretory vesicle. The protein resides in the microneme membrane. It catalyses the reaction Hydrolysis of proteins with broad specificity for peptide bonds, and a preference for a large uncharged residue in P1. Hydrolyzes peptide amides.. Activation may be calcium-dependent. Inhibited by the non-covalent interaction with the cleaved propeptide. Functionally, serine protease which plays an essential role in the shedding of AMA1, MSP1 and MSP7 from the surface of the invading merozoite; this step is essential for productive invasion and the release of the adhesion between the erythrocyte and the merozoite. May cleave TRAMP/PTTRAMP, thereby shedding TRAMP from the merozoite surface during erythrocyte invasion. The sequence is that of Subtilisin-like protease 2 from Plasmodium falciparum (isolate 3D7).